The primary structure comprises 545 residues: CTP synthase (545 aa).

Positions 1–266 (MKTKFIFITG…DQKIAIMLKL (266 aa)) are amidoligase domain. Ser14 contributes to the CTP binding site. Ser14 serves as a coordination point for UTP. Residues 15-20 (SLGKGL) and Asp72 each bind ATP. Mg(2+) is bound by residues Asp72 and Glu140. CTP-binding positions include 147–149 (DIE), 187–192 (KTKPTQ), and Lys223. Residues 187-192 (KTKPTQ) and Lys223 contribute to the UTP site. The 255-residue stretch at 291-545 (TIGIVGKYVD…IKASCENKNK (255 aa)) folds into the Glutamine amidotransferase type-1 domain. Residue Gly353 coordinates L-glutamine. Catalysis depends on Cys380, which acts as the Nucleophile; for glutamine hydrolysis. L-glutamine-binding positions include 381–384 (LGMQ), Glu404, and Arg472. Residues His518 and Glu520 contribute to the active site.

Belongs to the CTP synthase family. As to quaternary structure, homotetramer.

The catalysed reaction is UTP + L-glutamine + ATP + H2O = CTP + L-glutamate + ADP + phosphate + 2 H(+). It catalyses the reaction L-glutamine + H2O = L-glutamate + NH4(+). The enzyme catalyses UTP + NH4(+) + ATP = CTP + ADP + phosphate + 2 H(+). It participates in pyrimidine metabolism; CTP biosynthesis via de novo pathway; CTP from UDP: step 2/2. Allosterically activated by GTP, when glutamine is the substrate; GTP has no effect on the reaction when ammonia is the substrate. The allosteric effector GTP functions by stabilizing the protein conformation that binds the tetrahedral intermediate(s) formed during glutamine hydrolysis. Inhibited by the product CTP, via allosteric rather than competitive inhibition. Catalyzes the ATP-dependent amination of UTP to CTP with either L-glutamine or ammonia as the source of nitrogen. Regulates intracellular CTP levels through interactions with the four ribonucleotide triphosphates. This Maridesulfovibrio salexigens (strain ATCC 14822 / DSM 2638 / NCIMB 8403 / VKM B-1763) (Desulfovibrio salexigens) protein is CTP synthase.